A 117-amino-acid chain; its full sequence is Hainantoxin-XV.2 (117 aa).

Residues 1-20 form the signal peptide; sequence MKLCAVIIASLLVCAAVASS. Positions 18–55 are disordered; that stretch reads ASSSDNQKEFAQEKEMTREETQSLGEHEKDDEVTGSEE. The propeptide occupies 21-56; it reads SDNQKEFAQEKEMTREETQSLGEHEKDDEVTGSEER. Residues 23–55 are compositionally biased toward basic and acidic residues; it reads NQKEFAQEKEMTREETQSLGEHEKDDEVTGSEE. 4 disulfides stabilise this stretch: C58-C72, C65-C78, C69-C115, and C71-C91.

The protein belongs to the neurotoxin 03 (Tx2) family. 02 subfamily. HNTX-XV sub-subfamily. Expressed by the venom gland.

It localises to the secreted. Its function is as follows. Putative ion channel inhibitor. The sequence is that of Hainantoxin-XV.2 from Cyriopagopus hainanus (Chinese bird spider).